A 771-amino-acid chain; its full sequence is Probable exo-1,4-beta-xylosidase xlnD (771 aa).

A signal peptide spans 1 to 25; sequence MARIMSWHYGKAITLFVCLGPVALS. Asn67 carries N-linked (GlcNAc...) asparagine glycosylation. Residue Asp293 is part of the active site. Residues Asn305, Asn345, Asn423, and Asn464 are each glycosylated (N-linked (GlcNAc...) asparagine).

This sequence belongs to the glycosyl hydrolase 3 family.

The protein resides in the secreted. It catalyses the reaction Hydrolysis of (1-&gt;4)-beta-D-xylans, to remove successive D-xylose residues from the non-reducing termini.. Its pathway is glycan degradation; xylan degradation. Its function is as follows. Xylan 1,4-beta-xylosidase involved in the hydrolysis of xylan, a major structural heterogeneous polysaccharide found in plant biomass representing the second most abundant polysaccharide in the biosphere, after cellulose. This chain is Probable exo-1,4-beta-xylosidase xlnD (xlnD), found in Neosartorya fischeri (strain ATCC 1020 / DSM 3700 / CBS 544.65 / FGSC A1164 / JCM 1740 / NRRL 181 / WB 181) (Aspergillus fischerianus).